The following is a 186-amino-acid chain: Small ribosomal subunit protein uS19 (186 aa).

Residues 1 to 95 form a unknown region; the sequence is MREAIKRYGS…YEELYAQYKQ (95 aa). The small ribosomal subunit protein uS19 stretch occupies residues 96–186; the sequence is MTEKKAYVDP…EKTAKVVKKK (91 aa).

This sequence belongs to the universal ribosomal protein uS19 family.

Functionally, protein S19 forms a complex with S13 that binds strongly to the 16S ribosomal RNA. This is Small ribosomal subunit protein uS19 from Aquifex aeolicus (strain VF5).